The sequence spans 60 residues: UPF0434 protein YE1549 (60 aa).

The protein belongs to the UPF0434 family.

The polypeptide is UPF0434 protein YE1549 (Yersinia enterocolitica serotype O:8 / biotype 1B (strain NCTC 13174 / 8081)).